A 475-amino-acid chain; its full sequence is MRDYTKQYINGEWVESNSNETIEVINPATEEVIGKVAKGNKADVDKAVEAADNVYLEFRHTSVKERQALLDKIVKEYENRKDDIVQAITDELGAPLSLSERVHYQMGLNHFVAARDALDNYEFEERRGDDLVVKEAIGVSGLITPWNFPTNQTSLKLAAAFAAGSPVVLKPSEETPFAAVILAEIFDKVGVPKGVFNLVNGDGAGVGNPLSEHPKVRMMSFTGSGPTGSKIMEKAAKDFKKVSLELGGKSPYIVLDDVDIKEAAKATTGKVVNNTGQVCTAGTRVLVPKKIKDAFLAELKEQFSQVRVGNPREDGTQVGPIISKKQFDQVQNYINKGIEEGAELFYGGPGKPEGLEKGYFARPTIFINVDNQMTIAQEEIFGPVMSVITYNDLDEAIQIANDTKYGLAGYVIGKDKETLHKVARSIEAGTVEINEAGRKPDLPFGGYKQSGLGREWGDYGIEEFLEVKSIAGYFK.

Residues 146-147 (WN) and 223-224 (GS) each bind NAD(+). Glu245 serves as the catalytic Proton acceptor. Leu246 contacts NAD(+). The active-site Nucleophile is Cys279. Glu379 serves as a coordination point for NAD(+).

It belongs to the aldehyde dehydrogenase family.

The catalysed reaction is an aldehyde + NAD(+) + H2O = a carboxylate + NADH + 2 H(+). The polypeptide is Putative aldehyde dehydrogenase (Staphylococcus aureus (strain MSSA476)).